Here is a 202-residue protein sequence, read N- to C-terminus: Endothelin-1 (202 aa).

Positions 1–25 (MDYFPMIFALLFVAFQGAPEAAVLG) are cleaved as a signal peptide. A propeptide spanning residues 26-50 (TELSTGAESGGERPVPTTPWRPRRS) is cleaved from the precursor. Residues 29–48 (STGAESGGERPVPTTPWRPR) are disordered. 2 disulfide bridges follow: Cys53/Cys67 and Cys55/Cys63. A propeptide spanning residues 74–202 (VNTPEHVVPY…DKKVIYSRAH (129 aa)) is cleaved from the precursor. Residues 110-124 (CQCASQTDKKCQNFC) are endothelin-like.

Belongs to the endothelin/sarafotoxin family.

It localises to the secreted. Its function is as follows. Endothelins are endothelium-derived vasoconstrictor peptides. Probable ligand for G-protein coupled receptors EDNRA and EDNRB which activates PTK2B, BCAR1, BCAR3 and, GTPases RAP1 and RHOA cascade in glomerular mesangial cells. Also binds the DEAR/FBXW7-AS1 receptor. Promotes mesenteric arterial wall remodeling via activation of ROCK signaling and subsequent colocalization of NFATC3 with F-actin filaments. NFATC3 then translocates to the nucleus where it subsequently promotes the transcription of the smooth muscle hypertrophy and differentiation marker ACTA2. This chain is Endothelin-1 (EDN1), found in Ovis aries (Sheep).